The sequence spans 235 residues: MSVISMKQLLEAGVHFGHQTRRWNPKMKKYIFTERNGIYIIDLQKTVKKMEEAYNFVKELAANGGKILFVGTKKQAQESVKEEAERCGMFYVNQRWLGGTLTNFATIQKRIKRLKEIEKMAEDGTFDVLPKKEVIRIKKEQERLEKFLGGIKEMKELPDALFVIDPRKERIAVAEARKLNIPIIGIVDTNCDPDEIDYVIPANDDAIRAVKLLTSKIADAVLEAKQGEEAVVAAE.

This sequence belongs to the universal ribosomal protein uS2 family.

This Geobacillus sp. (strain WCH70) protein is Small ribosomal subunit protein uS2.